The following is a 328-amino-acid chain: GTP 3',8-cyclase (328 aa).

Residues 9 to 229 form the Radical SAM core domain; it reads GFGRDVRYLR…DNGLNTGGPA (221 aa). Arg-18 lines the GTP pocket. Residues Cys-25 and Cys-29 each contribute to the [4Fe-4S] cluster site. Tyr-31 contacts S-adenosyl-L-methionine. A [4Fe-4S] cluster-binding site is contributed by Cys-32. Position 60 (Arg-60) interacts with GTP. Gly-64 lines the S-adenosyl-L-methionine pocket. GTP is bound at residue Thr-94. Ser-118 lines the S-adenosyl-L-methionine pocket. GTP is bound at residue Lys-154. Met-188 is an S-adenosyl-L-methionine binding site. [4Fe-4S] cluster-binding residues include Cys-252 and Cys-255. 257–259 contributes to the GTP binding site; sequence RVR. Residue Cys-269 participates in [4Fe-4S] cluster binding.

It belongs to the radical SAM superfamily. MoaA family. Monomer and homodimer. [4Fe-4S] cluster serves as cofactor.

The enzyme catalyses GTP + AH2 + S-adenosyl-L-methionine = (8S)-3',8-cyclo-7,8-dihydroguanosine 5'-triphosphate + 5'-deoxyadenosine + L-methionine + A + H(+). It participates in cofactor biosynthesis; molybdopterin biosynthesis. Its function is as follows. Catalyzes the cyclization of GTP to (8S)-3',8-cyclo-7,8-dihydroguanosine 5'-triphosphate. This chain is GTP 3',8-cyclase, found in Rhodobacter capsulatus (Rhodopseudomonas capsulata).